A 212-amino-acid chain; its full sequence is Thiamine-phosphate synthase (212 aa).

4-amino-2-methyl-5-(diphosphooxymethyl)pyrimidine contacts are provided by residues 39-43 (QLREK) and N71. 2 residues coordinate Mg(2+): D72 and D91. Residue S110 coordinates 4-amino-2-methyl-5-(diphosphooxymethyl)pyrimidine. 137–139 (TPT) contributes to the 2-[(2R,5Z)-2-carboxy-4-methylthiazol-5(2H)-ylidene]ethyl phosphate binding site. K140 contacts 4-amino-2-methyl-5-(diphosphooxymethyl)pyrimidine. Residue G168 participates in 2-[(2R,5Z)-2-carboxy-4-methylthiazol-5(2H)-ylidene]ethyl phosphate binding.

This sequence belongs to the thiamine-phosphate synthase family. Requires Mg(2+) as cofactor.

It catalyses the reaction 2-[(2R,5Z)-2-carboxy-4-methylthiazol-5(2H)-ylidene]ethyl phosphate + 4-amino-2-methyl-5-(diphosphooxymethyl)pyrimidine + 2 H(+) = thiamine phosphate + CO2 + diphosphate. It carries out the reaction 2-(2-carboxy-4-methylthiazol-5-yl)ethyl phosphate + 4-amino-2-methyl-5-(diphosphooxymethyl)pyrimidine + 2 H(+) = thiamine phosphate + CO2 + diphosphate. The catalysed reaction is 4-methyl-5-(2-phosphooxyethyl)-thiazole + 4-amino-2-methyl-5-(diphosphooxymethyl)pyrimidine + H(+) = thiamine phosphate + diphosphate. It functions in the pathway cofactor biosynthesis; thiamine diphosphate biosynthesis; thiamine phosphate from 4-amino-2-methyl-5-diphosphomethylpyrimidine and 4-methyl-5-(2-phosphoethyl)-thiazole: step 1/1. Its function is as follows. Condenses 4-methyl-5-(beta-hydroxyethyl)thiazole monophosphate (THZ-P) and 2-methyl-4-amino-5-hydroxymethyl pyrimidine pyrophosphate (HMP-PP) to form thiamine monophosphate (TMP). This is Thiamine-phosphate synthase from Acidothermus cellulolyticus (strain ATCC 43068 / DSM 8971 / 11B).